The following is a 313-amino-acid chain: Homoserine O-succinyltransferase (313 aa).

Cys-142 acts as the Acyl-thioester intermediate in catalysis. Lys-163 and Ser-192 together coordinate substrate. The active-site Proton acceptor is the His-235. Glu-237 is an active-site residue. Position 249 (Arg-249) interacts with substrate.

It belongs to the MetA family.

Its subcellular location is the cytoplasm. It catalyses the reaction L-homoserine + succinyl-CoA = O-succinyl-L-homoserine + CoA. Its pathway is amino-acid biosynthesis; L-methionine biosynthesis via de novo pathway; O-succinyl-L-homoserine from L-homoserine: step 1/1. In terms of biological role, transfers a succinyl group from succinyl-CoA to L-homoserine, forming succinyl-L-homoserine. This chain is Homoserine O-succinyltransferase, found in Aliivibrio fischeri (strain MJ11) (Vibrio fischeri).